The sequence spans 315 residues: Replication factor C small subunit (315 aa).

An ATP-binding site is contributed by 43 to 50 (GSPGVGKT).

Belongs to the activator 1 small subunits family. RfcS subfamily. In terms of assembly, heteromultimer composed of small subunits (RfcS) and large subunits (RfcL).

In terms of biological role, part of the RFC clamp loader complex which loads the PCNA sliding clamp onto DNA. The sequence is that of Replication factor C small subunit from Methanococcus maripaludis (strain C6 / ATCC BAA-1332).